The following is a 204-amino-acid chain: Putative peptidase PfaP (204 aa).

An N-terminal signal peptide occupies residues 1–27 (MRLRKTRKIVVSMKDMAASGGYYIASS). Residue Ser-19 is the Nucleophile of the active site. Residue Lys-70 is the Proton donor/acceptor of the active site.

This sequence belongs to the peptidase S49 family.

In terms of biological role, possible protease. May be involved in export of periplasmic flagella proteins. The polypeptide is Putative peptidase PfaP (pfaP) (Leptospira borgpetersenii).